Consider the following 563-residue polypeptide: GTPase Obg (563 aa).

An Obg domain is found at 2 to 168 (SDFVDRVTVH…RDVILELKSI (167 aa)). In terms of domain architecture, OBG-type G spans 169–349 (ADVALVGFPS…LNFALSALVH (181 aa)). Residues 175 to 182 (GFPSAGKS), 200 to 204 (FTTLV), 221 to 224 (DVPG), 301 to 304 (NKID), and 330 to 332 (STA) contribute to the GTP site. Ser182 and Thr202 together coordinate Mg(2+). The OCT domain occupies 383–469 (DEGGSALEFT…ARMVEFDWDP (87 aa)). The tract at residues 529–563 (RKAGHWADPTVDDDRHDETSLFGHGESSEDGETEE) is disordered.

It belongs to the TRAFAC class OBG-HflX-like GTPase superfamily. OBG GTPase family. As to quaternary structure, monomer. It depends on Mg(2+) as a cofactor.

It localises to the cytoplasm. Its function is as follows. An essential GTPase which binds GTP, GDP and possibly (p)ppGpp with moderate affinity, with high nucleotide exchange rates and a fairly low GTP hydrolysis rate. Plays a role in control of the cell cycle, stress response, ribosome biogenesis and in those bacteria that undergo differentiation, in morphogenesis control. This is GTPase Obg from Bifidobacterium longum (strain NCC 2705).